The sequence spans 149 residues: Cell division protein SepF (149 aa).

It belongs to the SepF family. In terms of assembly, homodimer. Interacts with FtsZ.

It localises to the cytoplasm. In terms of biological role, cell division protein that is part of the divisome complex and is recruited early to the Z-ring. Probably stimulates Z-ring formation, perhaps through the cross-linking of FtsZ protofilaments. Its function overlaps with FtsA. In Clostridium perfringens (strain ATCC 13124 / DSM 756 / JCM 1290 / NCIMB 6125 / NCTC 8237 / Type A), this protein is Cell division protein SepF.